The following is a 393-amino-acid chain: Cobalt-precorrin-5B C(1)-methyltransferase (393 aa).

The disordered stretch occupies residues 1–35 (MSDETRVGEAAEQAATPEKIRKGSARRERGNRTGF). Residues 18-31 (EKIRKGSARRERGN) are compositionally biased toward basic and acidic residues.

The protein belongs to the CbiD family.

The catalysed reaction is Co-precorrin-5B + S-adenosyl-L-methionine = Co-precorrin-6A + S-adenosyl-L-homocysteine. The protein operates within cofactor biosynthesis; adenosylcobalamin biosynthesis; cob(II)yrinate a,c-diamide from sirohydrochlorin (anaerobic route): step 6/10. In terms of biological role, catalyzes the methylation of C-1 in cobalt-precorrin-5B to form cobalt-precorrin-6A. The polypeptide is Cobalt-precorrin-5B C(1)-methyltransferase (Dechloromonas aromatica (strain RCB)).